The sequence spans 396 residues: Formate-dependent phosphoribosylglycinamide formyltransferase (396 aa).

N(1)-(5-phospho-beta-D-ribosyl)glycinamide-binding positions include 24-25 (EL) and Glu-84. Residues Arg-116, Lys-157, 162–167 (SSGKGQ), 197–200 (EGFV), and Glu-205 contribute to the ATP site. The ATP-grasp domain maps to 121 to 310 (RLAAETLGIK…EFALHVRAIL (190 aa)). Residues Glu-269 and Glu-281 each coordinate Mg(2+). N(1)-(5-phospho-beta-D-ribosyl)glycinamide contacts are provided by residues Asp-288, Lys-359, and 366 to 367 (RR).

It belongs to the PurK/PurT family. In terms of assembly, homodimer.

It catalyses the reaction N(1)-(5-phospho-beta-D-ribosyl)glycinamide + formate + ATP = N(2)-formyl-N(1)-(5-phospho-beta-D-ribosyl)glycinamide + ADP + phosphate + H(+). Its pathway is purine metabolism; IMP biosynthesis via de novo pathway; N(2)-formyl-N(1)-(5-phospho-D-ribosyl)glycinamide from N(1)-(5-phospho-D-ribosyl)glycinamide (formate route): step 1/1. Its function is as follows. Involved in the de novo purine biosynthesis. Catalyzes the transfer of formate to 5-phospho-ribosyl-glycinamide (GAR), producing 5-phospho-ribosyl-N-formylglycinamide (FGAR). Formate is provided by PurU via hydrolysis of 10-formyl-tetrahydrofolate. The sequence is that of Formate-dependent phosphoribosylglycinamide formyltransferase from Psychromonas ingrahamii (strain DSM 17664 / CCUG 51855 / 37).